A 238-amino-acid chain; its full sequence is Probable phosphatase phospho2 (238 aa).

D8 functions as the Nucleophile in the catalytic mechanism. Mg(2+)-binding residues include D8 and D10. D10 functions as the Proton donor in the catalytic mechanism. Positions 19 and 99 each coordinate substrate. Position 179 (D179) interacts with Mg(2+).

It belongs to the HAD-like hydrolase superfamily. PHOSPHO family. It depends on Mg(2+) as a cofactor.

Functionally, probable phosphatase. This Xenopus tropicalis (Western clawed frog) protein is Probable phosphatase phospho2 (phospho2).